A 341-amino-acid chain; its full sequence is N-acetyl-gamma-glutamyl-phosphate reductase (341 aa).

C145 is an active-site residue.

The protein belongs to the NAGSA dehydrogenase family. Type 1 subfamily.

It localises to the cytoplasm. It carries out the reaction N-acetyl-L-glutamate 5-semialdehyde + phosphate + NADP(+) = N-acetyl-L-glutamyl 5-phosphate + NADPH + H(+). It participates in amino-acid biosynthesis; L-arginine biosynthesis; N(2)-acetyl-L-ornithine from L-glutamate: step 3/4. Its function is as follows. Catalyzes the NADPH-dependent reduction of N-acetyl-5-glutamyl phosphate to yield N-acetyl-L-glutamate 5-semialdehyde. The sequence is that of N-acetyl-gamma-glutamyl-phosphate reductase from Methanothrix thermoacetophila (strain DSM 6194 / JCM 14653 / NBRC 101360 / PT) (Methanosaeta thermophila).